The following is a 70-amino-acid chain: Beta-insect excitatory toxin LqqIT1 (70 aa).

The 64-residue stretch at 2 to 65 (KNGYAVDSSG…ISDARKKYCD (64 aa)) folds into the LCN-type CS-alpha/beta domain. Disulfide bonds link Cys-16–Cys-37, Cys-22–Cys-42, Cys-26–Cys-44, and Cys-38–Cys-64.

Belongs to the long (4 C-C) scorpion toxin superfamily. Sodium channel inhibitor family. Beta subfamily. In terms of tissue distribution, expressed by the venom gland.

Its subcellular location is the secreted. Excitatory insect beta-toxins induce a spastic paralysis. They bind voltage-independently at site-4 of sodium channels (Nav) and shift the voltage of activation toward more negative potentials thereby affecting sodium channel activation and promoting spontaneous and repetitive firing. In vivo, this toxin induces a fast excitatory contraction paralysis on fly larvae. It is active only on insects. This chain is Beta-insect excitatory toxin LqqIT1, found in Leiurus quinquestriatus quinquestriatus (Egyptian scorpion).